The chain runs to 301 residues: ADP-ribosyl cyclase/cyclic ADP-ribose hydrolase 1 (301 aa).

The Cytoplasmic portion of the chain corresponds to 1 to 21; that stretch reads MANCEFSPVSGDKPCCRLSRR. A helical; Signal-anchor for type II membrane protein transmembrane segment spans residues 22–43; the sequence is AQVCLGVCLLVLLILVVVVAVV. Over 44-301 the chain is Extracellular; the sequence is LPRWRQQWSG…PEDSSCLSGI (258 aa). Cystine bridges form between cysteine 68/cysteine 83, cysteine 100/cysteine 181, and cysteine 161/cysteine 174. Asparagine 101 carries an N-linked (GlcNAc...) asparagine glycan. Cysteine 120 is a catalytic residue. The N-linked (GlcNAc...) asparagine glycan is linked to asparagine 121. Residue cysteine 202 is part of the active site. 2 N-linked (GlcNAc...) asparagine glycosylation sites follow: asparagine 210 and asparagine 220. Disulfide bonds link cysteine 255–cysteine 276 and cysteine 288–cysteine 297.

It belongs to the ADP-ribosyl cyclase family. Homodimer.

The protein localises to the cell surface. The protein resides in the membrane. The catalysed reaction is NAD(+) = cyclic ADP-beta-D-ribose + nicotinamide + H(+). It carries out the reaction 2'-phospho-cyclic ADP-ribose + nicotinate = nicotinate-adenine dinucleotide phosphate. It catalyses the reaction NAD(+) + H2O = ADP-D-ribose + nicotinamide + H(+). The enzyme catalyses nicotinate + NADP(+) = nicotinate-adenine dinucleotide phosphate + nicotinamide. With respect to regulation, ATP inhibits the cADPR hydrolyzing activity. Functionally, synthesizes cyclic ADP-ribose (cADPR), a second messenger for glucose-induced insulin secretion. Synthesizes the Ca(2+) mobilizer nicotinate-adenine dinucleotide phosphate, NAADP(+), from 2'-phospho-cADPR and nicotinic acid, as well as from NADP(+) and nicotinic acid. Also has cADPR hydrolase activity. In Macaca fascicularis (Crab-eating macaque), this protein is ADP-ribosyl cyclase/cyclic ADP-ribose hydrolase 1 (CD38).